The primary structure comprises 692 residues: Elongation factor G (692 aa).

The region spanning 8–283 is the tr-type G domain; it reads EDYRNFGIMA…AVVDYLPSPV (276 aa). Residues 17-24, 81-85, and 135-138 each bind GTP; these read AHIDAGKT, DTPGH, and NKMD.

It belongs to the TRAFAC class translation factor GTPase superfamily. Classic translation factor GTPase family. EF-G/EF-2 subfamily.

The protein localises to the cytoplasm. Catalyzes the GTP-dependent ribosomal translocation step during translation elongation. During this step, the ribosome changes from the pre-translocational (PRE) to the post-translocational (POST) state as the newly formed A-site-bound peptidyl-tRNA and P-site-bound deacylated tRNA move to the P and E sites, respectively. Catalyzes the coordinated movement of the two tRNA molecules, the mRNA and conformational changes in the ribosome. The chain is Elongation factor G from Caulobacter vibrioides (strain ATCC 19089 / CIP 103742 / CB 15) (Caulobacter crescentus).